A 360-amino-acid chain; its full sequence is Thiol protease SEN102 (360 aa).

An N-terminal signal peptide occupies residues 1 to 20; the sequence is MAKPKFIALALVALSFLSIA. A propeptide spans 21–133 (activation peptide); the sequence is QSIPFTEKDL…ENVGSLPAAS (113 aa). Disulfide bonds link cysteine 151–cysteine 193, cysteine 185–cysteine 225, and cysteine 283–cysteine 335. Residue cysteine 154 is part of the active site. Residues histidine 289 and asparagine 310 contribute to the active site. A glycan (N-linked (GlcNAc...) asparagine) is linked at asparagine 353. The Prevents secretion from ER motif lies at 357–360; the sequence is RDEL.

Belongs to the peptidase C1 family.

Its subcellular location is the endoplasmic reticulum lumen. This chain is Thiol protease SEN102 (SEN102), found in Hemerocallis sp. (Daylily).